A 368-amino-acid polypeptide reads, in one-letter code: MTSTTSKVTFGKSIGFRKELNRRVNAYLEAENISPRDNPPMYLKTAIILAWVVSAWTFVVFGPDVLWMKLLGCIVLGFGVSAVGFNISHDGNHGGYSKYQWVNYLSGLTHDAIGVSSYLWKFRHNVLHHTYTNILGHDVEIHGDELVRMSPSMEYRWYHRYQHWFIWFVYPFIPYYWSIADVQTMLFKRQYHDHEIPSPTWVDIATLLAFKAFGVAVFLIIPIAVGYSPLEAVIGASIVYMTHGLVACVVFMLAHVIEPAEFLDPDNLHIDDEWAIAQVKTTVDFAPNNPIINWYVGGLNYQTVHHLFPHICHIHYPKIAPILAEVCEEFGVNYAVHQTFFGALAANYSWLKKMSINPETKAIEQLTV.

A run of 2 helical transmembrane segments spans residues 47–67 and 68–88; these read IILAWVVSAWTFVVFGPDVLW and MKLLGCIVLGFGVSAVGFNIS. The Histidine box-1 motif lies at 89–93; that stretch reads HDGNH. The short motif at 124-129 is the Histidine box-2 element; it reads HNVLHH. 3 helical membrane passes run 164–184, 204–224, and 233–253; these read WFIWFVYPFIPYYWSIADVQT, IATLLAFKAFGVAVFLIIPIA, and VIGASIVYMTHGLVACVVFML. The short motif at 305-309 is the Histidine box-3 element; sequence HHLFP.

The protein belongs to the fatty acid desaturase type 2 family. Fe(2+) is required as a cofactor.

The protein localises to the cell inner membrane. It is found in the cellular thylakoid membrane. The enzyme catalyses a 1-[(9Z,12Z)-octadecdienoyl]-2-acyl-glycerolipid + 2 reduced [2Fe-2S]-[ferredoxin] + O2 + 2 H(+) = a 1-[(6Z,9Z,12Z)-octadectrienoyl]-2-acyl-glycerolipid + 2 oxidized [2Fe-2S]-[ferredoxin] + 2 H2O. It participates in lipid metabolism; polyunsaturated fatty acid biosynthesis. With respect to regulation, activity requires ferredoxin, which is the natural electron donor, or cytochrome b5. In addition, activity is increased in the presence of the intermediate electron donors, NADPH and FADH(2). Its function is as follows. Desaturase involved in fatty acid biosynthesis. Introduces a double bond at carbon 6 of linoleoyl group (18:2) attached to the sn-1 position of the glycerol moiety of membrane glycerolipids, leading to the formation of gamma-linolenic acid (GLA). The protein is sn-1 linoleoyl-lipid 6-desaturase of Arthrospira platensis (Spirulina platensis).